Here is a 366-residue protein sequence, read N- to C-terminus: D-alanine--D-alanine ligase A (366 aa).

Residues Lys-145 to Glu-348 enclose the ATP-grasp domain. Val-175–Glu-230 lines the ATP pocket. The Mg(2+) site is built by Asp-302, Glu-315, and Asn-317.

The protein belongs to the D-alanine--D-alanine ligase family. Mg(2+) is required as a cofactor. Requires Mn(2+) as cofactor.

The protein localises to the cytoplasm. The enzyme catalyses 2 D-alanine + ATP = D-alanyl-D-alanine + ADP + phosphate + H(+). It functions in the pathway cell wall biogenesis; peptidoglycan biosynthesis. Cell wall formation. This Chromobacterium violaceum (strain ATCC 12472 / DSM 30191 / JCM 1249 / CCUG 213 / NBRC 12614 / NCIMB 9131 / NCTC 9757 / MK) protein is D-alanine--D-alanine ligase A.